The chain runs to 365 residues: 2-aminoethylphosphonate--pyruvate transaminase (365 aa).

At K194 the chain carries N6-(pyridoxal phosphate)lysine.

This sequence belongs to the class-V pyridoxal-phosphate-dependent aminotransferase family. PhnW subfamily. In terms of assembly, homodimer. The cofactor is pyridoxal 5'-phosphate.

It catalyses the reaction (2-aminoethyl)phosphonate + pyruvate = phosphonoacetaldehyde + L-alanine. Functionally, involved in phosphonate degradation. The polypeptide is 2-aminoethylphosphonate--pyruvate transaminase (Bacillus cereus (strain ZK / E33L)).